Here is a 453-residue protein sequence, read N- to C-terminus: MLIAFCTCEIFHLTMTDQVKVRFFTNEEDDLKVSENPIFVPVSLKRYGLSEIVNHLLNDGETKKAIPFDFLVDGVLLRTSLQDYLTKQGLSTETVIDLQYTRAVLPPSFLASFTNEDWISSIDTINPGHGAVLASNMKLQESKILSGSYDGVVRTYNMSGEVESQYIGHSGPVKSVRWISPTRIVSAGNDHSLRLWKTKLAGVEEGAEDGKTTAILEGHKGPVVDLAVDYKSNKIISAGNDSVVGVWSTNASDMSAVTVSEPTGSTMSKKRKKLALQDSTIKRRAPLAMMDGHGQPVTGVCFDVNDKSVIYSASQDHTIKTWDLVTSRCVDTRSTGFSLLSILQLPNLHLVASGSSARHINLHDPRASSSTEQVSRKLVGHTNFVVSMAACPDKDHMFASASHDGTVKVWDVRADKAMYTLGKGGKVFGVSWDPIGIVSGGEDKKIDIYREAN.

The ubiquitin-like (UBL) domain stretch occupies residues 19–102; that stretch reads VKVRFFTNEE…ETVIDLQYTR (84 aa). Residues 112–453 are sufficient for interaction with ERB1 and association with 66S pre-ribosomes; that stretch reads SFTNEDWISS…KKIDIYREAN (342 aa). WD repeat units follow at residues 128–166, 168–206, 218–257, 292–332, 334–373, 380–420, and 422–453; these read GHGAVLASNMKLQESKILSGSYDGVVRTYNMSGEVESQY, GHSGPVKSVRWISPTRIVSAGNDHSLRLWKTKLAGVEEG, GHKGPVVDLAVDYKSNKIISAGNDSVVGVWSTNASDMSAV, GHGQ…CVDT, STGFSLLSILQLPNLHLVASGSSARHINLHDPRASSSTEQ, GHTN…AMYT, and GKGGKVFGVSWDPIGIVSGGEDKKIDIYREAN.

This sequence belongs to the WD repeat WDR12/YTM1 family. Component of the NOP7 complex, composed of ERB1, NOP7 and YTM1. The complex is held together by ERB1, which interacts with NOP7 via its N-terminal domain and with YTM1 via a high-affinity interaction between the seven-bladed beta-propeller domains of the 2 proteins. The NOP7 complex associates with the 66S pre-ribosome. Interacts (via UBL domain) with MDN1 (via VWFA/MIDAS domain).

The protein resides in the nucleus. The protein localises to the nucleolus. It localises to the nucleoplasm. Functionally, component of the NOP7 complex, which is required for maturation of the 25S and 5.8S ribosomal RNAs and formation of the 60S ribosome. This is Ribosome biogenesis protein YTM1 from Meyerozyma guilliermondii (strain ATCC 6260 / CBS 566 / DSM 6381 / JCM 1539 / NBRC 10279 / NRRL Y-324) (Yeast).